The primary structure comprises 115 residues: Large ribosomal subunit protein bL21 (115 aa).

The protein belongs to the bacterial ribosomal protein bL21 family. Part of the 50S ribosomal subunit. Contacts protein L20.

Functionally, this protein binds to 23S rRNA in the presence of protein L20. The sequence is that of Large ribosomal subunit protein bL21 from Picosynechococcus sp. (strain ATCC 27264 / PCC 7002 / PR-6) (Agmenellum quadruplicatum).